We begin with the raw amino-acid sequence, 113 residues long: Large ribosomal subunit protein bL19 (113 aa).

Belongs to the bacterial ribosomal protein bL19 family.

In terms of biological role, this protein is located at the 30S-50S ribosomal subunit interface and may play a role in the structure and function of the aminoacyl-tRNA binding site. The polypeptide is Large ribosomal subunit protein bL19 (Mycolicibacterium gilvum (strain PYR-GCK) (Mycobacterium gilvum (strain PYR-GCK))).